The following is a 393-amino-acid chain: Chorismate synthase (393 aa).

Positions 40 and 46 each coordinate NADP(+). FMN-binding positions include 135–137 (RAS), 257–258 (QA), Gly301, 316–320 (KPIAT), and Arg342. Positions 280-306 (DEIDVGPDGIRRRSNRAGGVEGGMSTG) are disordered.

Belongs to the chorismate synthase family. As to quaternary structure, homotetramer. Requires FMNH2 as cofactor.

The catalysed reaction is 5-O-(1-carboxyvinyl)-3-phosphoshikimate = chorismate + phosphate. It functions in the pathway metabolic intermediate biosynthesis; chorismate biosynthesis; chorismate from D-erythrose 4-phosphate and phosphoenolpyruvate: step 7/7. Its function is as follows. Catalyzes the anti-1,4-elimination of the C-3 phosphate and the C-6 proR hydrogen from 5-enolpyruvylshikimate-3-phosphate (EPSP) to yield chorismate, which is the branch point compound that serves as the starting substrate for the three terminal pathways of aromatic amino acid biosynthesis. This reaction introduces a second double bond into the aromatic ring system. The protein is Chorismate synthase of Thermobifida fusca (strain YX).